A 21-amino-acid chain; its full sequence is thr operon leader peptide (21 aa).

Belongs to the thr operon leader peptide family.

In terms of biological role, this protein is involved in control of the biosynthesis of threonine. In Salmonella choleraesuis (strain SC-B67), this protein is thr operon leader peptide.